Reading from the N-terminus, the 185-residue chain is Peptide deformylase (185 aa).

Fe cation is bound by residues cysteine 94 and histidine 136. Residue glutamate 137 is part of the active site. Residue histidine 140 participates in Fe cation binding.

The protein belongs to the polypeptide deformylase family. The cofactor is Fe(2+).

It carries out the reaction N-terminal N-formyl-L-methionyl-[peptide] + H2O = N-terminal L-methionyl-[peptide] + formate. In terms of biological role, removes the formyl group from the N-terminal Met of newly synthesized proteins. Requires at least a dipeptide for an efficient rate of reaction. N-terminal L-methionine is a prerequisite for activity but the enzyme has broad specificity at other positions. The polypeptide is Peptide deformylase (Chlorobium phaeobacteroides (strain BS1)).